Consider the following 88-residue polypeptide: Cell division topological specificity factor (88 aa).

The protein belongs to the MinE family.

Prevents the cell division inhibition by proteins MinC and MinD at internal division sites while permitting inhibition at polar sites. This ensures cell division at the proper site by restricting the formation of a division septum at the midpoint of the long axis of the cell. The chain is Cell division topological specificity factor from Aeromonas salmonicida (strain A449).